Here is a 523-residue protein sequence, read N- to C-terminus: Sensory neuron membrane protein 1 (523 aa).

At Met-1–Ala-11 the chain is on the cytoplasmic side. Residues Ile-12–Leu-32 form a helical membrane-spanning segment. Over Lys-33 to Val-458 the chain is Extracellular. Asn-67 and Asn-229 each carry an N-linked (GlcNAc...) asparagine glycan. 3 disulfide bridges follow: Cys-268–Cys-333, Cys-297–Cys-352, and Cys-335–Cys-341. N-linked (GlcNAc...) asparagine glycosylation is present at Asn-440. Residues Gly-459–Phe-479 form a helical membrane-spanning segment. Residues His-480–Ile-523 lie on the Cytoplasmic side of the membrane.

Belongs to the CD36 family.

It localises to the cell membrane. Its function is as follows. Plays an olfactory role that is not restricted to pheromone sensitivity. This is Sensory neuron membrane protein 1 from Helicoverpa armigera (Cotton bollworm).